A 1116-amino-acid chain; its full sequence is Disease resistance protein RGA5 (1116 aa).

Positions 1–177 are structured coiled coil (CC) domain; the sequence is MDAPASFSLG…HHGVSANLVG (177 aa). The NB-ARC domain maps to 182–466; sequence KTKLNRWLSD…WSAEGFVSAN (285 aa). LRR repeat units follow at residues 608–631, 633–653, 654–675, 677–701, 732–755, 786–808, 810–830, 835–857, and 858–882; these read LFQL…ISGL, YLET…LVHL, PNLL…GCMR, LRTL…ELTN, LSNL…DISS, LHKL…DNLT, LPSL…RFIF, LPVL…AGAM, and PNLQ…LFGI. The tract at residues 935-971 is disordered; the sequence is EEESHPLEKQHHKREKGSSAGHGVLEKESVEDSEKNT. A compositionally biased stretch (basic and acidic residues) spans 958 to 971; it reads VLEKESVEDSEKNT. The HMA domain maps to 997 to 1066; the sequence is RTKIVVKVHM…KCGLAELLMV (70 aa). An HMA-like domain region spans residues 1000–1070; that stretch reads IVVKVHMPCG…AELLMVELVE (71 aa).

Belongs to the disease resistance NB-LRR family. As to quaternary structure, forms homodimer or heterodimer with RGA4 through its coiled coil (CC) domain. Interacts with AVR1-Pia and AVR-CO39 through its C-terminal part containing the HMA-like domain. As to expression, expressed in leaves.

The protein localises to the cytoplasm. Functionally, disease resistance (R) protein that recognizes the AVR-Pia and AVR1-CO39 effector avirulence proteins from M.oryzae. Resistance proteins guard the plant against pathogens that contain an appropriate avirulence protein via an indirect interaction with this avirulence protein. That triggers a defense system including the hypersensitive response, which restricts the pathogen growth. Contribution of RGA4 is required to recognize the effector avirulence proteins AVR-Pia and AVR1-CO39 from M.oryzae. Acts as a repressor of the RGA4-mediated cell death activation. Upon infection, recognition and binding of the AVR effectors relieve the RGA5-mediated repression and triggers the hypersensitive response. Immune response triggered by the RGA4-RGA5 -mediated recognition of AVR1-CO39 confers resistance to X.oryzae pathovars. This Oryza sativa subsp. japonica (Rice) protein is Disease resistance protein RGA5.